The primary structure comprises 478 residues: Glycogen synthase (478 aa).

ADP-alpha-D-glucose is bound at residue K20.

Belongs to the glycosyltransferase 1 family. Bacterial/plant glycogen synthase subfamily.

It catalyses the reaction [(1-&gt;4)-alpha-D-glucosyl](n) + ADP-alpha-D-glucose = [(1-&gt;4)-alpha-D-glucosyl](n+1) + ADP + H(+). It functions in the pathway glycan biosynthesis; glycogen biosynthesis. Functionally, synthesizes alpha-1,4-glucan chains using ADP-glucose. The sequence is that of Glycogen synthase from Cereibacter sphaeroides (strain ATCC 17023 / DSM 158 / JCM 6121 / CCUG 31486 / LMG 2827 / NBRC 12203 / NCIMB 8253 / ATH 2.4.1.) (Rhodobacter sphaeroides).